The chain runs to 49 residues: Delta-actitoxin-Axm1a (49 aa).

3 disulfide bridges follow: Cys-4-Cys-46, Cys-6-Cys-36, and Cys-29-Cys-47.

This sequence belongs to the sea anemone sodium channel inhibitory toxin family. Type I subfamily.

Its subcellular location is the secreted. The protein localises to the nematocyst. Functionally, binds specifically to voltage-gated sodium channels (Nav) (site 3), thereby delaying their inactivation. This toxin retains the greatest capacity to discriminate between the cardiac (Nav1.5/SCN5A) and neuronal sodium channels (2.5 nM versus 120 nM, when electrophysiologically tested and 14 nM versus 400 nM, when tested by ion flux), whereas its paralog Anthopleurin-B has the highest affinity of all anemone toxins for the mammalian sodium channel. Its ability to differentiate between cardiac and skeletal channels appears to be associated with domain 4 of the channel. This toxin does not slow or inhibit closed-state inactivation of cardiac sodium channels, but selectively modifies inactivation from the open-state. It does not display phospholipid-binding activities, suggesting that the domain IV S3-S4 linker is located at the extracellular surface and not buried in the phospholipid bilayer. The protein is Delta-actitoxin-Axm1a of Anthopleura xanthogrammica (Giant green sea anemone).